We begin with the raw amino-acid sequence, 522 residues long: MSNRVIIFDTTLRDGEQALAASLSVKEKLQIAMALERLGVDVMEVGFPVSSPGDFESVQTIARTIKNSRVCALSRALEKDIDAAAQALSVADQFRIHTFISTSTIHVESKLKRSFDQVLEMAVGAVKYARRFTDDVEFSCEDAGRTPIDNLCRMVEAAILVGARTINIPDTVGYTVPSEFGTIIQTLFNRVPNIDQAVISVHCHDDLGLSVANSITAVQHGARQIECTINGIGERAGNCSLEEIAMILATRKGMLGLETGINAKEIHRTSNLVSQLCNMPVQANKAIVGANAFTHSSGIHQDGMLKAQNTYEIMTPESIGLNRNNLNMTSRSGRHVIKHRMEEMGYSEHDYNMDALYEEFLKLADKKGQVFDYDLEALAFMEAQAEEDNHYQLQQLVVQSDSTEGVATATVRIEVGGEIKTEAATGNGPVDAAYNAIARATDRRIDIISYKLGAKGVGQNALGQVDITAVYHEQNFHGVGLATDVVEASARALVHVMNLTCRADKVADYKQSMQKNRELGGV.

The Pyruvate carboxyltransferase domain maps to 5 to 267; the sequence is VIIFDTTLRD…ETGINAKEIH (263 aa). Residues Asp14, His202, His204, and Asn238 each contribute to the Mn(2+) site. Positions 392-522 are regulatory domain; sequence QLQQLVVQSD…MQKNRELGGV (131 aa).

This sequence belongs to the alpha-IPM synthase/homocitrate synthase family. LeuA type 1 subfamily. In terms of assembly, homodimer. Mn(2+) serves as cofactor.

Its subcellular location is the cytoplasm. The enzyme catalyses 3-methyl-2-oxobutanoate + acetyl-CoA + H2O = (2S)-2-isopropylmalate + CoA + H(+). The protein operates within amino-acid biosynthesis; L-leucine biosynthesis; L-leucine from 3-methyl-2-oxobutanoate: step 1/4. In terms of biological role, catalyzes the condensation of the acetyl group of acetyl-CoA with 3-methyl-2-oxobutanoate (2-ketoisovalerate) to form 3-carboxy-3-hydroxy-4-methylpentanoate (2-isopropylmalate). In Shewanella baltica (strain OS223), this protein is 2-isopropylmalate synthase.